A 286-amino-acid polypeptide reads, in one-letter code: uncharacterized protein (286 aa).

The region spanning 26–268 is the AB hydrolase-1 domain; that stretch reads PLIILCHGFC…DACHYDIYEG (243 aa).

To E.coli YcjY.

This is an uncharacterized protein from Escherichia coli.